Here is a 187-residue protein sequence, read N- to C-terminus: MEGVRPLEENVGNAPRPRFERNKLLLVASVVQALGLLLCLTYVCQHSHAPEVSLQYPPIENIMTQLQILTSHECEEDSFILPLQKRDGTMEVQNNSVVIQCDGFYLLSLKGYFSQEVSISLHYRKGEEPFPILKKTKFANSNVVLKLGYKDKVYLNVTTDSASCKQLSVNAGELIVILQNPGGYCAP.

Topologically, residues 1–23 (MEGVRPLEENVGNAPRPRFERNK) are cytoplasmic. The helical; Signal-anchor for type II membrane protein transmembrane segment at 24 to 44 (LLLVASVVQALGLLLCLTYVC) threads the bilayer. Residues 45 to 187 (QHSHAPEVSL…LQNPGGYCAP (143 aa)) lie on the Extracellular side of the membrane. In terms of domain architecture, THD spans 58-177 (PIENIMTQLQ…SVNAGELIVI (120 aa)). Cystine bridges form between Cys-74-Cys-164 and Cys-101-Cys-185. Residues Asn-94 and Asn-156 are each glycosylated (N-linked (GlcNAc...) asparagine).

It belongs to the tumor necrosis factor family. As to quaternary structure, homotrimer.

The protein localises to the membrane. Cytokine that binds to TNFRSF4. Co-stimulates T-cell proliferation and cytokine production. This Oryctolagus cuniculus (Rabbit) protein is Tumor necrosis factor ligand superfamily member 4 (TNFSF4).